The primary structure comprises 539 residues: Alpha-aminoadipic semialdehyde dehydrogenase (539 aa).

Residues 1–26 constitute a mitochondrion transit peptide; it reads MLRLARPLCVQTVKASKLSRLWSRPA. Lys-86, Lys-94, and Lys-97 each carry N6-acetyllysine; alternate. 3 positions are modified to N6-succinyllysine; alternate: Lys-86, Lys-94, and Lys-97. Residues 192 to 194, Lys-218, 258 to 259, 274 to 275, 274 to 279, and 296 to 297 each bind NAD(+); these read TAF, GT, GS, GSTQVG, and EL. The active-site Proton acceptor is the Glu-296. Cys-330 (nucleophile) is an active-site residue. Thr-331 contacts (S)-2-amino-6-oxohexanoate. Glu-427 is an NAD(+) binding site. Lys-462 carries the post-translational modification N6-acetyllysine. Positions 489 and 490 each coordinate (S)-2-amino-6-oxohexanoate. Lys-500 is modified (N6-acetyllysine). The residue at position 537 (Lys-537) is an N6-succinyllysine.

Belongs to the aldehyde dehydrogenase family. In terms of assembly, homotetramer. Abundant in kidney, liver, cochlea and outer hair cells but not inner hair cells or vestibular type I hair cells. Very low levels in lung, brain, intestine and pancreas.

The protein resides in the cytoplasm. The protein localises to the cytosol. Its subcellular location is the nucleus. It localises to the mitochondrion. It carries out the reaction nonanal + NAD(+) + H2O = nonanoate + NADH + 2 H(+). The catalysed reaction is (S)-2-amino-6-oxohexanoate + NAD(+) + H2O = L-2-aminoadipate + NADH + 2 H(+). It catalyses the reaction betaine aldehyde + NAD(+) + H2O = glycine betaine + NADH + 2 H(+). The enzyme catalyses an aldehyde + NAD(+) + H2O = a carboxylate + NADH + 2 H(+). It carries out the reaction hexanal + NAD(+) + H2O = hexanoate + NADH + 2 H(+). The catalysed reaction is octanal + NAD(+) + H2O = octanoate + NADH + 2 H(+). It catalyses the reaction (E)-non-2-enal + NAD(+) + H2O = (E)-non-2-enoate + NADH + 2 H(+). The enzyme catalyses (E)-4-hydroxynon-2-enal + NAD(+) + H2O = (E)-4-hydroxynon-2-enoate + NADH + 2 H(+). It participates in amine and polyamine biosynthesis; betaine biosynthesis via choline pathway; betaine from betaine aldehyde: step 1/1. Its function is as follows. Multifunctional enzyme mediating important protective effects. Metabolizes betaine aldehyde to betaine, an important cellular osmolyte and methyl donor. Protects cells from oxidative stress by metabolizing a number of lipid peroxidation-derived aldehydes. Involved in lysine catabolism. The sequence is that of Alpha-aminoadipic semialdehyde dehydrogenase from Rattus norvegicus (Rat).